A 395-amino-acid polypeptide reads, in one-letter code: Elongation factor Tu (395 aa).

A tr-type G domain is found at 10 to 205; that stretch reads KPHVNIGTIG…CDTWIPLPPR (196 aa). Residues 19–26 are G1; the sequence is GHVDHGKT. GTP is bound at residue 19 to 26; the sequence is GHVDHGKT. Mg(2+) is bound at residue Thr26. The interval 60–64 is G2; sequence GITIN. A G3 region spans residues 81-84; that stretch reads DCPG. Residues 81 to 85 and 136 to 139 contribute to the GTP site; these read DCPGH and NKCD. The segment at 136 to 139 is G4; sequence NKCD. The segment at 174–176 is G5; that stretch reads SAL.

Belongs to the TRAFAC class translation factor GTPase superfamily. Classic translation factor GTPase family. EF-Tu/EF-1A subfamily. Monomer.

The protein localises to the cytoplasm. It catalyses the reaction GTP + H2O = GDP + phosphate + H(+). In terms of biological role, GTP hydrolase that promotes the GTP-dependent binding of aminoacyl-tRNA to the A-site of ribosomes during protein biosynthesis. The chain is Elongation factor Tu from Parabacteroides distasonis (strain ATCC 8503 / DSM 20701 / CIP 104284 / JCM 5825 / NCTC 11152).